Here is a 62-residue protein sequence, read N- to C-terminus: MNFTKILFFVVACVFAMRTVSAAPWNPFKELEKVGQRVRDAVISAGPAVATVAQATALAKGK.

An N-terminal signal peptide occupies residues 1–22; the sequence is MNFTKILFFVVACVFAMRTVSA. Residues 23 to 24 constitute a propeptide, removed by a dipeptidylpeptidase; sequence AP. The residue at position 60 (Lys60) is a Lysine amide.

It belongs to the cecropin family.

It is found in the secreted. Cecropins have lytic and antibacterial activity against several Gram-positive and Gram-negative bacteria. The chain is Cecropin-D from Hyalophora cecropia (Cecropia moth).